The primary structure comprises 580 residues: PX domain-containing protein kinase-like protein (580 aa).

Positions 14-126 constitute a PX domain; it reads LDDTVPLTAA…KFLDPNNYSA (113 aa). In terms of domain architecture, Protein kinase spans 88-481; sequence FIAERQKGLQ…VENSEEQPVK (394 aa). Residues 433 to 551 form a disordered region; it reads EQKQIHQHRR…LPQAVNGVNR (119 aa). Composition is skewed to basic residues over residues 437-448 and 457-469; these read IHQHRRLTRAQS and KRRK…KSKR. The span at 483–514 shows a compositional bias: low complexity; the sequence is SNANNSAGSGASSPLTSPSSPTPPSTAGLSSA. Residues 515–531 show a composition bias toward pro residues; the sequence is LPPPPPPPPPPPPPAGP. The WH2 domain maps to 549–568; that stretch reads VNRGALLSSIQNFQKGTLRK.

Belongs to the protein kinase superfamily.

The protein localises to the cytoplasm. It localises to the cell membrane. Its function is as follows. Binds to and modulates brain Na,K-ATPase subunits ATP1B1 and ATP1B3 and may thereby participate in the regulation of electrical excitability and synaptic transmission. May not display kinase activity. The polypeptide is PX domain-containing protein kinase-like protein (Rattus norvegicus (Rat)).